A 171-amino-acid chain; its full sequence is Large ribosomal subunit protein bL9 (171 aa).

The protein belongs to the bacterial ribosomal protein bL9 family.

Binds to the 23S rRNA. This Rickettsia typhi (strain ATCC VR-144 / Wilmington) protein is Large ribosomal subunit protein bL9.